A 368-amino-acid polypeptide reads, in one-letter code: MYKTFFKLVFSRMDPERAHHLAFRWIRLAVRVPVLRTFVAAALAPRHKELRTEALGLRMHGPFGLAAGFDKNAVAIDGMAMLGFDHVEIGTVTGEPQPGNPKKRLFRLVADRALINRMGFNNDGSLAVAARLASRTPVFRTVVGVNIGKTKVVPEEEAVGDYVKSAERLAPHADYLVVNVSSPNTPGLRNLQATEALRPLLSAVREAADRAVTARRVPLLVKIAPDLADEDVDAVADLAVELGLDGIIATNTTIAREGLGLTSSPALVGETGGLSGAPLKARSLEVLRRLYARVGDRITLVGVGGVETAEDAWERILAGATLVQGYSAFIYEGPFWGRAMHKGLAARLRQSPYATLADAVGADVRKHS.

FMN contacts are provided by residues 67–71 (AGFDK) and Thr91. Lys71 is a substrate binding site. 116–120 (NRMGF) lines the substrate pocket. Residues Asn146 and Asn179 each coordinate FMN. Asn179 is a binding site for substrate. The active-site Nucleophile is Ser182. A substrate-binding site is contributed by Asn184. The FMN site is built by Lys222 and Thr250. 251-252 (NT) serves as a coordination point for substrate. Residues Gly276, Gly305, and 326–327 (YS) each bind FMN.

This sequence belongs to the dihydroorotate dehydrogenase family. Type 2 subfamily. As to quaternary structure, monomer. It depends on FMN as a cofactor.

The protein resides in the cell membrane. The enzyme catalyses (S)-dihydroorotate + a quinone = orotate + a quinol. It functions in the pathway pyrimidine metabolism; UMP biosynthesis via de novo pathway; orotate from (S)-dihydroorotate (quinone route): step 1/1. Its function is as follows. Catalyzes the conversion of dihydroorotate to orotate with quinone as electron acceptor. This Streptomyces coelicolor (strain ATCC BAA-471 / A3(2) / M145) protein is Dihydroorotate dehydrogenase (quinone).